We begin with the raw amino-acid sequence, 494 residues long: GPI alpha-1,6-mannosyltransferase 2 (494 aa).

Topologically, residues 1–13 (MWSLDPSQKEVLR) are cytoplasmic. Residues 14 to 34 (FAVSCRILTLMLQALFNIIIP) form a helical membrane-spanning segment. At 35–77 (DHHADAFSPPRLASSCSVDQLVEGLLGGLSRWDAEHFLFIAEH) the chain is on the lumenal side. The chain crosses the membrane as a helical span at residues 78 to 98 (GYLYEHNFAFFPGFPLALLMG). At 99–113 (TELLRPLQGLLSQRS) the chain is on the cytoplasmic side. The helical transmembrane segment at 114–134 (CLLVSVALLNFLFSVLAAVTL) threads the bilayer. Over 135–136 (HD) the chain is Lumenal. The chain crosses the membrane as a helical span at residues 137–157 (LGCLVLGCPRQAFYAAMLFCL). The Cytoplasmic portion of the chain corresponds to 158 to 161 (SPAN). Residues 162–182 (VFLAAGYSEALFAFLTFSAMG) form a helical membrane-spanning segment. Topologically, residues 183-192 (QLERGRSWAS) are lumenal. The chain crosses the membrane as a helical span at residues 193 to 213 (GLLFALATGVRSNGLVSVGFL). The Cytoplasmic segment spans residues 214–234 (LHAQCRGFFSSLVVLNPLKPL). Residues 235-255 (FKLMASLCLSVLTVSLPFALF) traverse the membrane as a helical segment. Residues 256 to 327 (QYYAYTQFCL…RYYELRQVPN (72 aa)) lie on the Lumenal side of the membrane. A helical transmembrane segment spans residues 328–348 (FLLATPVAVLVVWAAWTYVTT). Residues 349 to 379 (HPWLCLTLGLRRSKDSKKTLEKPHPGFLSPK) lie on the Cytoplasmic side of the membrane. The chain crosses the membrane as a helical span at residues 380 to 400 (VFVYLVHAAGLLLFGSLCMHV). Topologically, residues 401 to 470 (QVLTRLLCSS…NWRACSPVTR (70 aa)) are lumenal. A helical transmembrane segment spans residues 471-491 (CILGYFLTYWLLGLLLHCNFL). The Cytoplasmic portion of the chain corresponds to 492–494 (PWT).

This sequence belongs to the PIGV family. Post-translationally, not N-glycosylated.

The protein localises to the endoplasmic reticulum membrane. Its pathway is glycolipid biosynthesis; glycosylphosphatidylinositol-anchor biosynthesis. Its function is as follows. Alpha-1,6-mannosyltransferase that catalyzes the transfer of the second mannose, via an alpha-1,6 bond, from a dolichol-phosphate-mannose (Dol-P-Man) to the alpha-D-Man-(1-&gt;4)-alpha-D-GlcN-(1-&gt;6)-(1-radyl,2-acyl-sn-glycero-3-phospho)-2-acyl-inositol intermediate to generate an alpha-D-Man-(1-&gt;6)-alpha-D-Man-(1-&gt;4)-alpha-D-GlcN-(1-&gt;6)-(1-radyl,2-acyl-sn-glycero-3-phospho)-2-acyl-inositol and participates in the seventh step of the glycosylphosphatidylinositol-anchor biosynthesis. Also transfers the second mannose on a 2-PEtn-alpha-D-Man-(1-&gt;4)-alpha-D-GlcN-(1-&gt;6)-(1-radyl,2-acyl-sn-glycero-3-phospho)-2-acyl-inositol. This is GPI alpha-1,6-mannosyltransferase 2 from Cricetulus griseus (Chinese hamster).